We begin with the raw amino-acid sequence, 473 residues long: Adenosylhomocysteinase (473 aa).

Substrate-binding residues include Thr-64, Asp-139, and Glu-199. 200 to 202 serves as a coordination point for NAD(+); that stretch reads TTT. Substrate-binding residues include Lys-229 and Asp-233. Residues Asn-234, 263-268, Glu-286, Asn-321, 342-344, and Asn-387 contribute to the NAD(+) site; these read GYGDVG and IGH.

The protein belongs to the adenosylhomocysteinase family. It depends on NAD(+) as a cofactor.

The protein resides in the cytoplasm. The catalysed reaction is S-adenosyl-L-homocysteine + H2O = L-homocysteine + adenosine. The protein operates within amino-acid biosynthesis; L-homocysteine biosynthesis; L-homocysteine from S-adenosyl-L-homocysteine: step 1/1. Functionally, may play a key role in the regulation of the intracellular concentration of adenosylhomocysteine. This Paraburkholderia xenovorans (strain LB400) protein is Adenosylhomocysteinase.